A 423-amino-acid chain; its full sequence is MSASAVFILDVKGKPLISRNYKGDVPMTEIDHFMPLLMQREEEGVLAPLLSHGRVHFLWIKHSNLYLVATTLKNANASLVYSFLYKTVEVFCEYFKELEEESIRDNFVIVYDLLDELMDFGFPQTTDSKILQEYITQQGNKLETGKSRVPPTVTNAVSWRSEGIKYKKNEVFIDVIESVNLLVNANGSVLLSEIVGTIKLKVFLSGMPELRLGLNDRVLFELTGRSKNKSVELEDVKFHQCVRLSRFDNDRTISFIPPDGDFELMSYRLSTQVKPLIWIESVIEKFSHSRVEIMVKAKGQFKKQSVANGVEISVPVPSDADSPRFKTSVGSAKYVPEKNVVIWSIKSFPGGKEYLMRAHFGLPSVETEEVEGRPPIGVKFEIPYFTVSGIQVRYMKIIEKSGYQALPWVRYITQSGDYQLRTS.

The MHD domain maps to 168-421; that stretch reads KNEVFIDVIE…ITQSGDYQLR (254 aa).

The protein belongs to the adaptor complexes medium subunit family. Adaptor protein complex 1 (AP-1) is a heterotetramer composed of two large adaptins (gamma-type subunit AP1G1 and beta-type subunit AP1B1), a medium adaptin (mu-type subunit AP1M1 or AP1M2) and a small adaptin (sigma-type subunit AP1S1 or AP1S2 or AP1S3). Interacts with P2X4. In terms of processing, phosphorylation of membrane-bound AP1M1/AP1M2 increases its affinity for sorting signals.

The protein localises to the golgi apparatus. The protein resides in the cytoplasmic vesicle. It localises to the clathrin-coated vesicle membrane. In terms of biological role, subunit of clathrin-associated adaptor protein complex 1 that plays a role in protein sorting in the trans-Golgi network (TGN) and endosomes. The AP complexes mediate the recruitment of clathrin to membranes and the recognition of sorting signals within the cytosolic tails of transmembrane cargo molecules. The sequence is that of AP-1 complex subunit mu-2 (Ap1m2) from Mus musculus (Mouse).